Consider the following 121-residue polypeptide: Large ribosomal subunit protein bL12 (121 aa).

This sequence belongs to the bacterial ribosomal protein bL12 family. Homodimer. Part of the ribosomal stalk of the 50S ribosomal subunit. Forms a multimeric L10(L12)X complex, where L10 forms an elongated spine to which 2 to 4 L12 dimers bind in a sequential fashion. Binds GTP-bound translation factors.

Forms part of the ribosomal stalk which helps the ribosome interact with GTP-bound translation factors. Is thus essential for accurate translation. The sequence is that of Large ribosomal subunit protein bL12 from Clostridioides difficile (strain 630) (Peptoclostridium difficile).